The primary structure comprises 466 residues: 20-hydroxyecdysone protein (466 aa).

Positions 1–16 (MKPVALILVFLAISQA) are cleaved as a signal peptide. The 1; approximate repeat unit spans residues 48–50 (EVK). Residues 48–157 (EVKAEEVKPE…EIKKEATEIK (110 aa)) are 16 X repeats. The 2; approximate repeat unit spans residues 53-55 (EVK). Residues 55 to 94 (KPEEVKPIAQEEKAKDLKEEVKPEIKPEIKEQPKPDIKDE) form a disordered region. The stretch at 58–60 (EVK) is one 3; approximate repeat. The 4; approximate repeat unit spans residues 70 to 72 (DLK). Residues 74-76 (EVK) form a 5; approximate repeat. One copy of the 6; approximate repeat lies at 78–80 (EIK). The stretch at 82-84 (EIK) is one 7; approximate repeat. One copy of the 8; approximate repeat lies at 90–92 (DIK). The stretch at 94-96 (EIK) is one 9; approximate repeat. The 10; approximate repeat unit spans residues 98 to 100 (DLK). An 11; approximate repeat occupies 102–104 (DIK). One copy of the 12; approximate repeat lies at 106–108 (ELK). Positions 119–220 (PNAKPLELKE…QQSTTQGNFV (102 aa)) are disordered. Residues 124–160 (LELKEKSLEAEEKPQEIKEEVQQPEIKKEATEIKEEP) are compositionally biased toward basic and acidic residues. Residues 125–127 (ELK) form a 13; approximate repeat. Residues 139 to 141 (EIK) form a 14; approximate repeat. The 15; approximate repeat unit spans residues 148-150 (EIK). A 16; approximate repeat occupies 155–157 (EIK). The span at 170 to 180 (AEETVVVPAEE) shows a compositional bias: low complexity. A compositionally biased stretch (polar residues) spans 185 to 194 (PVEQEQSENQ). Low complexity predominate over residues 203-216 (QATQATPTQQSTTQ). Residues asparagine 294 and asparagine 352 are each glycosylated (N-linked (GlcNAc...) asparagine). The segment at 378–435 (RPQNAPAAAPATQATEKPAVDDKIDPANDEVGEFVPESDNELRASGENIDDSFEDAGV) is disordered. The segment covering 379–394 (PQNAPAAAPATQATEK) has biased composition (low complexity). Residues 404-416 (ANDEVGEFVPESD) are compositionally biased toward acidic residues.

The protein localises to the secreted. In terms of biological role, probably has an essential role in embryogenesis, induces morphogenesis of imaginal disks, and may participate in multimolecular aggregates. The sequence is that of 20-hydroxyecdysone protein (ImpE2) from Drosophila melanogaster (Fruit fly).